A 155-amino-acid polypeptide reads, in one-letter code: MADRARAARMAKRIQTIVANTIEHSVKDRRLELVTITDTQLTGDLHDATVFYTVRGRTLDEEPDREQAAEALHRARGQLRKAVGDQLGVRFTPTLTFTLDTVPETSARLEELLAQARQRDQEVARQAEGATPAGDANPYKTSPHEGRPESEADGW.

Basic and acidic residues-rich tracts occupy residues 116 to 125 (ARQRDQEVAR) and 142 to 155 (SPHEGRPESEADGW). Positions 116 to 155 (ARQRDQEVARQAEGATPAGDANPYKTSPHEGRPESEADGW) are disordered.

Belongs to the RbfA family. Monomer. Binds 30S ribosomal subunits, but not 50S ribosomal subunits or 70S ribosomes.

The protein resides in the cytoplasm. One of several proteins that assist in the late maturation steps of the functional core of the 30S ribosomal subunit. Associates with free 30S ribosomal subunits (but not with 30S subunits that are part of 70S ribosomes or polysomes). Required for efficient processing of 16S rRNA. May interact with the 5'-terminal helix region of 16S rRNA. The polypeptide is Ribosome-binding factor A (Corynebacterium kroppenstedtii (strain DSM 44385 / JCM 11950 / CIP 105744 / CCUG 35717)).